Here is a 208-residue protein sequence, read N- to C-terminus: MAENGLNIVWHSRSLTKADYYDRNGHRPLVVWFTGLSGSGKSTLAHAAEEALFKKGCYTYILDGDNMRHGLNSDLGFSEADRRENIRRIGEVAKLFVDAGIVVLAAFISPYQEDRDRVRALFEPAEFIEIYVKCDLDTCESRDPKGLYRKARAGQLPQFTGIDSPYEEPQAPELVIDTCRLGVEESVAAIIRFVERRSADGGRLTADG.

An ATP-binding site is contributed by 35 to 42 (GLSGSGKS). Residue Ser-109 is the Phosphoserine intermediate of the active site.

This sequence belongs to the APS kinase family.

It carries out the reaction adenosine 5'-phosphosulfate + ATP = 3'-phosphoadenylyl sulfate + ADP + H(+). Its pathway is sulfur metabolism; hydrogen sulfide biosynthesis; sulfite from sulfate: step 2/3. Functionally, catalyzes the synthesis of activated sulfate. The sequence is that of Adenylyl-sulfate kinase from Geotalea uraniireducens (strain Rf4) (Geobacter uraniireducens).